The chain runs to 628 residues: Isoleucine--tRNA ligase (628 aa).

The 'KMSKS' region motif lies at 505–509 (KMSKR). An ATP-binding site is contributed by Lys508.

It belongs to the class-I aminoacyl-tRNA synthetase family.

It carries out the reaction tRNA(Ile) + L-isoleucine + ATP = L-isoleucyl-tRNA(Ile) + AMP + diphosphate. The polypeptide is Isoleucine--tRNA ligase (Antonospora locustae (Microsporidian parasite)).